Consider the following 66-residue polypeptide: Opicalcin-1 (66 aa).

Positions Met-1 to Ala-22 are cleaved as a signal peptide. Positions Asp-23–Glu-31 are excised as a propeptide. 3 cysteine pairs are disulfide-bonded: Cys-36–Cys-50, Cys-43–Cys-54, and Cys-49–Cys-65. Residues Lys-55–Arg-57 form an essential for stimulation of [3H]ryanodine binding to RYR1 region.

This sequence belongs to the scorpion calcin family. Expressed by the venom gland.

The protein localises to the secreted. This toxin stabilizes ryanodine receptor 1 (RyR1) opening in a long-lasting subconductance state (35% of the full conductance state). Furthermore, it triggers calcium release from sarcoplasmic vesicles (2 nM are enough to induce a sharp release, and 67% of the total calcium is released after toxin (100 nM) addition) probably by acting as a cell-penetrating peptide (CPP). In addition, it has been shown to dose-dependently stimulate ryanodine binding to RyR1 (EC(50)=0.3 nM). It also augments the bell-shaped calcium-[3H]ryanodine binding curve that is maximal at about 10 uM calcium concentration. It binds a different site as ryanodine. It acts synergistically with caffeine. In vivo, intracerebroventricular injection into mice induces neurotoxic symptoms, followed by death. This Opistophthalmus carinatus (African yellow leg scorpion) protein is Opicalcin-1.